The primary structure comprises 196 residues: ATP-dependent Clp protease proteolytic subunit (196 aa).

The Nucleophile role is filled by serine 96. The active site involves histidine 121.

Belongs to the peptidase S14 family. Fourteen ClpP subunits assemble into 2 heptameric rings which stack back to back to give a disk-like structure with a central cavity, resembling the structure of eukaryotic proteasomes.

It localises to the cytoplasm. It carries out the reaction Hydrolysis of proteins to small peptides in the presence of ATP and magnesium. alpha-casein is the usual test substrate. In the absence of ATP, only oligopeptides shorter than five residues are hydrolyzed (such as succinyl-Leu-Tyr-|-NHMec, and Leu-Tyr-Leu-|-Tyr-Trp, in which cleavage of the -Tyr-|-Leu- and -Tyr-|-Trp bonds also occurs).. Its function is as follows. Cleaves peptides in various proteins in a process that requires ATP hydrolysis. Has a chymotrypsin-like activity. Plays a major role in the degradation of misfolded proteins. The polypeptide is ATP-dependent Clp protease proteolytic subunit (Streptococcus pneumoniae (strain ATCC 700669 / Spain 23F-1)).